We begin with the raw amino-acid sequence, 175 residues long: uncharacterized protein (175 aa).

This is an uncharacterized protein from Mycobacterium tuberculosis (strain ATCC 25618 / H37Rv).